The following is a 1199-amino-acid chain: Putative pyruvate-flavodoxin oxidoreductase (1199 aa).

4Fe-4S ferredoxin-type domains follow at residues 681 to 710 (EIPV…GKVY) and 737 to 766 (FTIQ…QPRL). [4Fe-4S] cluster is bound by residues Cys690, Cys693, Cys696, Cys700, Cys746, Cys749, Cys752, Cys756, Cys820, Cys823, Cys848, and Cys1079.

It belongs to the pyruvate:ferredoxin/flavodoxin oxidoreductase family. It depends on [4Fe-4S] cluster as a cofactor.

It catalyses the reaction oxidized [flavodoxin] + pyruvate + CoA + 2 H(+) = reduced [flavodoxin] + acetyl-CoA + CO2. Oxidoreductase required for the transfer of electrons from pyruvate to flavodoxin. The sequence is that of Putative pyruvate-flavodoxin oxidoreductase (nifJ) from Synechocystis sp. (strain ATCC 27184 / PCC 6803 / Kazusa).